Here is a 573-residue protein sequence, read N- to C-terminus: (R)-mandelonitrile lyase 3 (573 aa).

The first 27 residues, 1 to 27 (MVKSTMSAVLLVLHIFVLHLQYSEVQS), serve as a signal peptide directing secretion. A glycan (N-linked (GlcNAc...) asparagine) is linked at Asn-30. 63–64 (TA) lines the FAD pocket. The N-linked (GlcNAc...) asparagine glycan is linked to Asn-75. FAD contacts are provided by residues 82–83 (ER), Val-129, Thr-133, and 137–140 (NAGV). N-linked (GlcNAc...) asparagine glycans are attached at residues Asn-145, Asn-150, Asn-162, and Asn-218. Val-244 contacts FAD. N-linked (GlcNAc...) asparagine glycosylation is found at Asn-252, Asn-267, and Asn-309. Cys-356 lines the substrate pocket. Asn-380, Asn-402, Asn-420, and Asn-467 each carry an N-linked (GlcNAc...) asparagine glycan. The cysteines at positions 427 and 478 are disulfide-linked. Tyr-485 is a substrate binding site. FAD-binding positions include 486-487 (WH) and Gly-515. His-487 acts as the Proton donor in catalysis. His-525 serves as the catalytic Proton acceptor. 526 to 527 (PQ) provides a ligand contact to FAD.

The protein belongs to the GMC oxidoreductase family. Monomer. The cofactor is FAD.

It is found in the vacuole. It localises to the aleurone grain. It carries out the reaction (R)-mandelonitrile = benzaldehyde + hydrogen cyanide. Its function is as follows. Involved in cyanogenesis, the release of HCN from injured tissues. Catalyzes the stereospecific addition of HCN to a variety of aldehydes in vitro. It is a major seed constituent, and could have the additional role of a storage form for reduced nitrogen. This chain is (R)-mandelonitrile lyase 3 (MDL3), found in Prunus serotina (Black cherry).